Here is a 344-residue protein sequence, read N- to C-terminus: Arginine N-succinyltransferase (344 aa).

Position 125 (Leu125) interacts with succinyl-CoA. Catalysis depends on His229, which acts as the Proton donor.

It belongs to the arginine N-succinyltransferase family.

It catalyses the reaction succinyl-CoA + L-arginine = N(2)-succinyl-L-arginine + CoA + H(+). It participates in amino-acid degradation; L-arginine degradation via AST pathway; L-glutamate and succinate from L-arginine: step 1/5. Its function is as follows. Catalyzes the transfer of succinyl-CoA to arginine to produce N(2)-succinylarginine. The chain is Arginine N-succinyltransferase from Citrobacter koseri (strain ATCC BAA-895 / CDC 4225-83 / SGSC4696).